Reading from the N-terminus, the 399-residue chain is Succinate--CoA ligase [ADP-forming] subunit beta (399 aa).

Residues 9–254 (KAVLAEFGAP…ESEEDPKEIE (246 aa)) enclose the ATP-grasp domain. ATP contacts are provided by residues Lys46, 53–55 (GRG), Glu109, Ala112, and Glu117. Mg(2+)-binding residues include Asn209 and Asp223. Substrate contacts are provided by residues Asn274 and 331 to 333 (GIM).

The protein belongs to the succinate/malate CoA ligase beta subunit family. In terms of assembly, heterotetramer of two alpha and two beta subunits. The cofactor is Mg(2+).

The catalysed reaction is succinate + ATP + CoA = succinyl-CoA + ADP + phosphate. It carries out the reaction GTP + succinate + CoA = succinyl-CoA + GDP + phosphate. Its pathway is carbohydrate metabolism; tricarboxylic acid cycle; succinate from succinyl-CoA (ligase route): step 1/1. In terms of biological role, succinyl-CoA synthetase functions in the citric acid cycle (TCA), coupling the hydrolysis of succinyl-CoA to the synthesis of either ATP or GTP and thus represents the only step of substrate-level phosphorylation in the TCA. The beta subunit provides nucleotide specificity of the enzyme and binds the substrate succinate, while the binding sites for coenzyme A and phosphate are found in the alpha subunit. The chain is Succinate--CoA ligase [ADP-forming] subunit beta from Caulobacter vibrioides (strain NA1000 / CB15N) (Caulobacter crescentus).